A 247-amino-acid polypeptide reads, in one-letter code: UPF0273 protein PH0284 (247 aa).

The 245-residue stretch at Arg3 to Leu247 folds into the KaiC domain. Gly30 to Thr37 contacts ATP.

The protein belongs to the UPF0273 family.

In Pyrococcus horikoshii (strain ATCC 700860 / DSM 12428 / JCM 9974 / NBRC 100139 / OT-3), this protein is UPF0273 protein PH0284.